The primary structure comprises 189 residues: MSLINKEILPFTAQAFDPKKDQFKEVTQEDLKGSWSVVCFYPADFSFVCPTELEDLQNQYEELQKLGVNVFSVSTDTHFVHKAWHDHSDAISKITYTMIGDPSQTITRNFDVLDEATGLAQRGTFIIDPDGVVQASEINADGIGRDASTLAHKIKAAQYVRKNPGEVCPAKWEEGAKTLQPGLDLVGKI.

The region spanning 2–159 (SLINKEILPF…LAHKIKAAQY (158 aa)) is the Thioredoxin domain. The active-site Cysteine sulfenic acid (-SOH) intermediate is the Cys49.

The protein belongs to the peroxiredoxin family. AhpC/Prx1 subfamily. As to quaternary structure, homodimer; disulfide-linked, upon oxidation. 5 homodimers assemble to form a ring-like decamer.

It is found in the cytoplasm. The catalysed reaction is a hydroperoxide + NADH + H(+) = an alcohol + NAD(+) + H2O. Its function is as follows. Thiol-specific peroxidase that catalyzes the reduction of hydrogen peroxide and organic hydroperoxides to water and alcohols, respectively. Plays a role in cell protection against oxidative stress by detoxifying peroxides. The chain is Alkyl hydroperoxide reductase C (ahpC) from Staphylococcus aureus (strain USA300).